The primary structure comprises 278 residues: Sulfur carrier protein FdhD (278 aa).

The active-site Cysteine persulfide intermediate is the Cys-113. 251-256 (FCRNGR) serves as a coordination point for Mo-bis(molybdopterin guanine dinucleotide).

Belongs to the FdhD family.

It localises to the cytoplasm. In terms of biological role, required for formate dehydrogenase (FDH) activity. Acts as a sulfur carrier protein that transfers sulfur from IscS to the molybdenum cofactor prior to its insertion into FDH. The polypeptide is Sulfur carrier protein FdhD (Shewanella oneidensis (strain ATCC 700550 / JCM 31522 / CIP 106686 / LMG 19005 / NCIMB 14063 / MR-1)).